The chain runs to 266 residues: Tryptophan synthase alpha chain (266 aa).

Catalysis depends on proton acceptor residues Glu-45 and Asp-56.

It belongs to the TrpA family. In terms of assembly, tetramer of two alpha and two beta chains.

It catalyses the reaction (1S,2R)-1-C-(indol-3-yl)glycerol 3-phosphate + L-serine = D-glyceraldehyde 3-phosphate + L-tryptophan + H2O. It functions in the pathway amino-acid biosynthesis; L-tryptophan biosynthesis; L-tryptophan from chorismate: step 5/5. Functionally, the alpha subunit is responsible for the aldol cleavage of indoleglycerol phosphate to indole and glyceraldehyde 3-phosphate. This is Tryptophan synthase alpha chain from Novosphingobium aromaticivorans (strain ATCC 700278 / DSM 12444 / CCUG 56034 / CIP 105152 / NBRC 16084 / F199).